Here is an 863-residue protein sequence, read N- to C-terminus: Potassium/sodium hyperpolarization-activated cyclic nucleotide-gated channel 2 (863 aa).

The span at 1 to 10 (MDARGGGGRP) shows a compositional bias: gly residues. The interval 1–131 (MDARGGGGRP…AGPAGEPRGS (131 aa)) is disordered. Residues 1–188 (MDARGGGGRP…PYSDFRFYWD (188 aa)) are Cytoplasmic-facing. Over residues 17–47 (TPAPGPPPPPPPPAPPQPQPPPAPPPNPTTP) the composition is skewed to pro residues. A compositionally biased stretch (low complexity) spans 106–128 (GAASGPAAAEEAGSEEAGPAGEP). Residues Ser119 and Ser134 each carry the phosphoserine modification. Positions 131 to 182 (SQASFLQRQFGALLQPGVNKFSLRMFGSQKAVEREQERVKSAGAWIIHPYSD) are involved in subunit assembly. The helical transmembrane segment at 189-209 (FTMLLFMVGNLIIIPVGITFF) threads the bilayer. Residues 210 to 213 (KDET) lie on the Extracellular side of the membrane. Residues 214–234 (TAPWIVFNVVSDTFFLMDLVL) traverse the membrane as a helical segment. Topologically, residues 235–261 (NFRTGIVIEDNTEIILDPEKIKKKYLR) are cytoplasmic. A helical membrane pass occupies residues 262–282 (TWFVVDFVSSIPVDYIFLIVE). The Extracellular segment spans residues 283-290 (KGIDSEVY). The chain crosses the membrane as a helical; Voltage-sensor span at residues 291-311 (KTARALRIVRFTKILSLLRLL). The Cytoplasmic portion of the chain corresponds to 312–342 (RLSRLIRYIHQWEEIFHMTYDLASAVMRICN). The helical transmembrane segment at 343–363 (LISMMLLLCHWDGCLQFLVPM) threads the bilayer. Topologically, residues 364 to 386 (LQDFPSDCWVSINNMVNHSWSEL) are extracellular. N-linked (GlcNAc...) asparagine glycosylation is present at Asn380. The segment at residues 387 to 408 (YSFALFKAMSHMLCIGYGRQAP) is an intramembrane region (pore-forming). Residues 409–413 (ESMTD) lie on the Extracellular side of the membrane. The chain crosses the membrane as a helical span at residues 414–434 (IWLTMLSMIVGATCYAMFIGH). The Cytoplasmic segment spans residues 435-863 (ATALIQSLDS…SARSRLSSNL (429 aa)). The 3',5'-cyclic AMP site is built by Gly581, Glu582, Cys584, Arg591, Thr592, and Arg632. Phosphoserine; by PKG/PRKG2 is present on Ser641. The residue at position 726 (Ser726) is a Phosphoserine. Arg728 carries the post-translational modification Omega-N-methylarginine. The segment at 730 to 863 (VRRAPPGPLP…SARSRLSSNL (134 aa)) is disordered. Pro residues predominate over residues 734-755 (PPGPLPPAASPGPPAASPPAAP). Ser743, Ser750, and Ser757 each carry phosphoserine. 2 stretches are compositionally biased toward low complexity: residues 756 to 765 (SSPRAPRTSP) and 778 to 834 (PALP…AAPS). 3 positions are modified to phosphoserine: Ser840, Ser842, and Ser847.

The protein belongs to the potassium channel HCN family. In terms of assembly, homotetramer. The channel is composed of a homo- or heterotetrameric complex of pore-forming subunits. Heterotetramer with HCN1. Forms an obligate 4:4 complex with accessory subunit PEX5L. Interacts with KCNE2. Post-translationally, phosphorylation at Ser-641 by PRKG2 shifts the voltage-dependence to more negative voltages, hence counteracting the stimulatory effect of cGMP on gating. In terms of processing, N-glycosylated; required for cell surface trafficking of HCN2. S-palmitoylated. As to expression, highly expressed in neonatal and adult ventricle and in brain. Highly expressed in the pyramidal layer in hippocampus, in anterior dorsal nucleus in thalamus, in the mammillary nucleus in hypothalamus, in red nucleus, in trigeminal mesencephalic, spinal and principal nuclei, in cochlear and trapezoid nuclei and in the dorsal tegemental nucleus.

The protein localises to the cell membrane. The catalysed reaction is Na(+)(in) = Na(+)(out). It catalyses the reaction K(+)(in) = K(+)(out). It carries out the reaction NH4(+)(in) = NH4(+)(out). Its activity is regulated as follows. Activated by cAMP, and at 10-100 times higher concentrations, also by cGMP. cAMP binding causes a conformation change that leads to the assembly of an active tetramer and channel opening. In the absence of cAMP, the C-terminal region is thought to exert a tonic inhibition on the pore when HCN2 is in a non-tetrameric form. Channel activity is modulated by intracellular chloride ions and pH; acidic pH shifts the activation to more negative voltages. Phosphatidylinositol-4,5- bisphosphate (PIP(2)) acts as a ligand that allosterically opens HCN2 by shifting voltage-dependent channel activation toward depolarized potentials. Inhibited by extracellular cesium ions. Its function is as follows. Hyperpolarization-activated ion channel exhibiting weak selectivity for potassium over sodium ions. Contributes to the native pacemaker currents in heart (If) and in neurons (Ih). Can also transport ammonium in the distal nephron. Involved in the initiation of neuropathic pain in sensory neurons. Produces a large instantaneous current. In Rattus norvegicus (Rat), this protein is Potassium/sodium hyperpolarization-activated cyclic nucleotide-gated channel 2 (Hcn2).